We begin with the raw amino-acid sequence, 198 residues long: Probable molybdenum cofactor guanylyltransferase (198 aa).

GTP is bound by residues 9–11 (LAG), Lys-22, Asp-66, and Asp-95. Asp-95 contributes to the Mg(2+) binding site.

This sequence belongs to the MobA family. Mg(2+) serves as cofactor.

It localises to the cytoplasm. The catalysed reaction is Mo-molybdopterin + GTP + H(+) = Mo-molybdopterin guanine dinucleotide + diphosphate. Functionally, transfers a GMP moiety from GTP to Mo-molybdopterin (Mo-MPT) cofactor (Moco or molybdenum cofactor) to form Mo-molybdopterin guanine dinucleotide (Mo-MGD) cofactor. This Clostridium perfringens (strain 13 / Type A) protein is Probable molybdenum cofactor guanylyltransferase.